We begin with the raw amino-acid sequence, 191 residues long: Large ribosomal subunit protein bL9 (191 aa).

The tract at residues 171–191 (EDALKPEDFFNPEAELESEEE) is disordered.

It belongs to the bacterial ribosomal protein bL9 family.

In terms of biological role, binds to the 23S rRNA. This is Large ribosomal subunit protein bL9 from Rhizobium meliloti (strain 1021) (Ensifer meliloti).